The sequence spans 356 residues: Histidinol-phosphate aminotransferase (356 aa).

Lysine 214 bears the N6-(pyridoxal phosphate)lysine mark.

This sequence belongs to the class-II pyridoxal-phosphate-dependent aminotransferase family. Histidinol-phosphate aminotransferase subfamily. Homodimer. Requires pyridoxal 5'-phosphate as cofactor.

It carries out the reaction L-histidinol phosphate + 2-oxoglutarate = 3-(imidazol-4-yl)-2-oxopropyl phosphate + L-glutamate. The protein operates within amino-acid biosynthesis; L-histidine biosynthesis; L-histidine from 5-phospho-alpha-D-ribose 1-diphosphate: step 7/9. The chain is Histidinol-phosphate aminotransferase from Escherichia coli O45:K1 (strain S88 / ExPEC).